A 361-amino-acid polypeptide reads, in one-letter code: Heme A synthase (361 aa).

The next 8 helical transmembrane spans lie at L22–G42, L109–G129, L139–S159, H175–P195, F208–G228, F269–T289, V303–V323, and V324–T344. H271 is a binding site for heme. H332 contacts heme.

It belongs to the COX15/CtaA family. Type 2 subfamily. Interacts with CtaB. It depends on heme b as a cofactor.

Its subcellular location is the cell membrane. The enzyme catalyses Fe(II)-heme o + 2 A + H2O = Fe(II)-heme a + 2 AH2. It participates in porphyrin-containing compound metabolism; heme A biosynthesis; heme A from heme O: step 1/1. Its function is as follows. Catalyzes the conversion of heme O to heme A by two successive hydroxylations of the methyl group at C8. The first hydroxylation forms heme I, the second hydroxylation results in an unstable dihydroxymethyl group, which spontaneously dehydrates, resulting in the formyl group of heme A. The protein is Heme A synthase of Chelativorans sp. (strain BNC1).